The chain runs to 195 residues: Thymidine kinase (195 aa).

Residues 15-22 and 88-91 contribute to the ATP site; these read GSMFSGKS and DEVQ. The active-site Proton acceptor is the glutamate 89. Residues cysteine 145, cysteine 148, cysteine 183, and cysteine 186 each coordinate Zn(2+).

The protein belongs to the thymidine kinase family. Homotetramer.

It is found in the cytoplasm. The catalysed reaction is thymidine + ATP = dTMP + ADP + H(+). This chain is Thymidine kinase, found in Bacillus cereus (strain 03BB102).